The following is a 79-amino-acid chain: Conotoxin Cal9.2a (79 aa).

An N-terminal signal peptide occupies residues 1–23 (MNCYLILTVALLLTSAMTGTTTA). A propeptide spanning residues 24-33 (GQLNKKGVTL) is cleaved from the precursor. 3 cysteine pairs are disulfide-bonded: C41/C58, C46/C68, and C48/C73.

As to expression, expressed by the venom duct.

Its subcellular location is the secreted. Functionally, probable neurotoxin with unknown target. Possibly targets ion channels. This is Conotoxin Cal9.2a from Californiconus californicus (California cone).